Consider the following 483-residue polypeptide: ATP-dependent RNA helicase dbp-5 (483 aa).

A disordered region spans residues 1-47; the sequence is MADLASRITKPDEAPAAAPEAAPVSAPASEEPKAPENETSIEESQSN. Positions 14-29 are enriched in low complexity; that stretch reads APAAAPEAAPVSAPAS. Residues 74-102 carry the Q motif motif; that stretch reads SSFDELGLPEAVNRGLLAINFKKPSKVQE. The Helicase ATP-binding domain maps to 107-276; it reads LMLSDPPRNM…ERFAPNANQM (170 aa). 120–127 serves as a coordination point for ATP; it reads SQSGTGKT. The DEAD box signature appears at 223 to 226; the sequence is DEAD. The region spanning 304-455 is the Helicase C-terminal domain; the sequence is ILCKLYGLMT…LIQLNPNDLD (152 aa).

Belongs to the DEAD box helicase family. DDX19/DBP5 subfamily. In terms of assembly, associates with the nuclear pore complex.

It is found in the cytoplasm. Its subcellular location is the nucleus. The protein resides in the nuclear pore complex. The protein localises to the nucleus membrane. The enzyme catalyses ATP + H2O = ADP + phosphate + H(+). Functionally, ATP-dependent RNA helicase associated with the nuclear pore complex and essential for mRNA export from the nucleus. May participate in a terminal step of mRNA export through the removal of proteins that accompany mRNA through the nucleopore complex. May also be involved in early transcription. In Neurospora crassa (strain ATCC 24698 / 74-OR23-1A / CBS 708.71 / DSM 1257 / FGSC 987), this protein is ATP-dependent RNA helicase dbp-5 (dbp-5).